The following is a 189-amino-acid chain: ATP-dependent protease subunit HslV (189 aa).

Residue Thr-12 is part of the active site. Positions 172, 175, and 178 each coordinate Na(+).

Belongs to the peptidase T1B family. HslV subfamily. A double ring-shaped homohexamer of HslV is capped on each side by a ring-shaped HslU homohexamer. The assembly of the HslU/HslV complex is dependent on binding of ATP.

Its subcellular location is the cytoplasm. The enzyme catalyses ATP-dependent cleavage of peptide bonds with broad specificity.. With respect to regulation, allosterically activated by HslU binding. Its function is as follows. Protease subunit of a proteasome-like degradation complex believed to be a general protein degrading machinery. This is ATP-dependent protease subunit HslV from Ehrlichia ruminantium (strain Welgevonden).